The sequence spans 115 residues: OV39 antigen (115 aa).

This chain is OV39 antigen (OV39), found in Onchocerca volvulus.